A 262-amino-acid chain; its full sequence is Hemin import ATP-binding protein HmuV (262 aa).

In terms of domain architecture, ABC transporter spans 5-242 (LEARKAGFAT…ELIGAVFDVE (238 aa)). 37–44 (GPNGAGKS) is a binding site for ATP.

The protein belongs to the ABC transporter superfamily. Heme (hemin) importer (TC 3.A.1.14.5) family. The complex is composed of two ATP-binding proteins (HmuV), two transmembrane proteins (HmuU) and a solute-binding protein (HmuT).

It is found in the cell inner membrane. Part of the ABC transporter complex HmuTUV involved in hemin import. Responsible for energy coupling to the transport system. This chain is Hemin import ATP-binding protein HmuV, found in Rhodopseudomonas palustris (strain HaA2).